The chain runs to 305 residues: Probable cell division protein WhiA (305 aa).

Positions 272–305 (SIQQLADSLTVPITKSGVNHRLRKINKIADELTD) form a DNA-binding region, H-T-H motif.

It belongs to the WhiA family.

Functionally, involved in cell division and chromosome segregation. This Streptococcus suis (strain 98HAH33) protein is Probable cell division protein WhiA.